The primary structure comprises 229 residues: 2-C-methyl-D-erythritol 4-phosphate cytidylyltransferase (229 aa).

Belongs to the IspD/TarI cytidylyltransferase family. IspD subfamily.

The enzyme catalyses 2-C-methyl-D-erythritol 4-phosphate + CTP + H(+) = 4-CDP-2-C-methyl-D-erythritol + diphosphate. Its pathway is isoprenoid biosynthesis; isopentenyl diphosphate biosynthesis via DXP pathway; isopentenyl diphosphate from 1-deoxy-D-xylulose 5-phosphate: step 2/6. Catalyzes the formation of 4-diphosphocytidyl-2-C-methyl-D-erythritol from CTP and 2-C-methyl-D-erythritol 4-phosphate (MEP). This chain is 2-C-methyl-D-erythritol 4-phosphate cytidylyltransferase, found in Neisseria meningitidis serogroup C (strain 053442).